A 281-amino-acid polypeptide reads, in one-letter code: ATP phosphoribosyltransferase (281 aa).

The protein belongs to the ATP phosphoribosyltransferase family. Long subfamily. In terms of assembly, equilibrium between an active dimeric form, an inactive hexameric form and higher aggregates. Interconversion between the various forms is largely reversible and is influenced by the natural substrates and inhibitors of the enzyme. Mg(2+) is required as a cofactor.

It localises to the cytoplasm. The enzyme catalyses 1-(5-phospho-beta-D-ribosyl)-ATP + diphosphate = 5-phospho-alpha-D-ribose 1-diphosphate + ATP. Its pathway is amino-acid biosynthesis; L-histidine biosynthesis; L-histidine from 5-phospho-alpha-D-ribose 1-diphosphate: step 1/9. With respect to regulation, feedback inhibited by histidine. Functionally, catalyzes the condensation of ATP and 5-phosphoribose 1-diphosphate to form N'-(5'-phosphoribosyl)-ATP (PR-ATP). Has a crucial role in the pathway because the rate of histidine biosynthesis seems to be controlled primarily by regulation of HisG enzymatic activity. This Mycolicibacterium gilvum (strain PYR-GCK) (Mycobacterium gilvum (strain PYR-GCK)) protein is ATP phosphoribosyltransferase.